Consider the following 186-residue polypeptide: MGSSSSRRRSSSLVTKVPKPTIDDRLDQGSATNYNSNWVNYKGAWVIHIVLIAALRLIFHAIPSVSRELAWTLTNLTYMAGSFIMFHWVTGTPFEFNGGAYDRLTMWEQLDEGNQYTPARKYLLVLPIILFLMSTHYTHYNGWMFLVNIWALFMVLIPKLPAVHRKRIFGIQKLSLRDDDNDSIPR.

3 consecutive transmembrane segments (helical) span residues 43 to 63 (GAWV…HAIP), 69 to 89 (LAWT…FHWV), and 143 to 163 (WMFL…LPAV).

It is found in the endoplasmic reticulum membrane. This is an uncharacterized protein from Schizosaccharomyces pombe (strain 972 / ATCC 24843) (Fission yeast).